The following is a 331-amino-acid chain: Probable protein phosphatase 2C 72 (331 aa).

Residues 43-324 (LGSVCSIQGT…DDITVICLFL (282 aa)) enclose the PPM-type phosphatase domain. Mn(2+)-binding residues include Asp78, Gly79, Asp268, and Asp315.

Belongs to the PP2C family. Mg(2+) serves as cofactor. The cofactor is Mn(2+).

The catalysed reaction is O-phospho-L-seryl-[protein] + H2O = L-seryl-[protein] + phosphate. It carries out the reaction O-phospho-L-threonyl-[protein] + H2O = L-threonyl-[protein] + phosphate. The chain is Probable protein phosphatase 2C 72 from Arabidopsis thaliana (Mouse-ear cress).